Reading from the N-terminus, the 91-residue chain is Putative 26S proteasome complex subunit sem-1 (91 aa).

Positions 1–73 (MASTQPKNDA…SWDDDDTSDD (73 aa)) are disordered. The segment covering 8–28 (NDAKSTEPKPEQPVTEKKTAV) has biased composition (basic and acidic residues). 2 stretches are compositionally biased toward acidic residues: residues 29–48 (LEEDDEFEDFPVDDWEAEDT) and 63–72 (ESWDDDDTSD).

It belongs to the DSS1/SEM1 family. Part of the 26S proteasome.

In terms of biological role, subunit of the 26S proteasome which plays a role in ubiquitin-dependent proteolysis. The polypeptide is Putative 26S proteasome complex subunit sem-1 (sem-1) (Neurospora crassa (strain ATCC 24698 / 74-OR23-1A / CBS 708.71 / DSM 1257 / FGSC 987)).